The chain runs to 338 residues: 1-aminocyclopropane-1-carboxylate deaminase (338 aa).

At lysine 51 the chain carries N6-(pyridoxal phosphate)lysine. Serine 78 (nucleophile) is an active-site residue.

Belongs to the ACC deaminase/D-cysteine desulfhydrase family. Homotrimer. Pyridoxal 5'-phosphate serves as cofactor.

The enzyme catalyses 1-aminocyclopropane-1-carboxylate + H2O = 2-oxobutanoate + NH4(+). Its function is as follows. Catalyzes a cyclopropane ring-opening reaction, the irreversible conversion of 1-aminocyclopropane-1-carboxylate (ACC) to ammonia and alpha-ketobutyrate. Allows growth on ACC as a nitrogen source. The sequence is that of 1-aminocyclopropane-1-carboxylate deaminase from Ralstonia nicotianae (strain ATCC BAA-1114 / GMI1000) (Ralstonia solanacearum).